A 656-amino-acid polypeptide reads, in one-letter code: Threonine--tRNA ligase (656 aa).

Residues 2-67 (LMSQITIILP…KDQTKVALVT (66 aa)) enclose the TGS domain. The interval 251–542 (DHRKLGKELG…YLEHTAGHLP (292 aa)) is catalytic. C342, H393, and H519 together coordinate Zn(2+).

It belongs to the class-II aminoacyl-tRNA synthetase family. In terms of assembly, homodimer. Zn(2+) serves as cofactor.

The protein resides in the cytoplasm. It carries out the reaction tRNA(Thr) + L-threonine + ATP = L-threonyl-tRNA(Thr) + AMP + diphosphate + H(+). Functionally, catalyzes the attachment of threonine to tRNA(Thr) in a two-step reaction: L-threonine is first activated by ATP to form Thr-AMP and then transferred to the acceptor end of tRNA(Thr). Also edits incorrectly charged L-seryl-tRNA(Thr). The chain is Threonine--tRNA ligase from Bdellovibrio bacteriovorus (strain ATCC 15356 / DSM 50701 / NCIMB 9529 / HD100).